Consider the following 126-residue polypeptide: Flagellar protein FliT (126 aa).

The required for homodimerization stretch occupies residues 1–50; the sequence is MVSPHRLLKDYQQLLSLSQKILHLAISGQWDTLVEQEIVYVQSVEGLVNT. The tract at residues 60 to 98 is fliD binding; sequence MRLHLRQILQEVMDNEAKVKQLLQKRMDELSSLMGQSLK.

It belongs to the FliT family. As to quaternary structure, homodimer. Interacts with FliD and FlhC.

It localises to the cytoplasm. The protein localises to the cytosol. Its function is as follows. Dual-function protein that regulates the transcription of class 2 flagellar operons and that also acts as an export chaperone for the filament-capping protein FliD. As a transcriptional regulator, acts as an anti-FlhDC factor; it directly binds FlhC, thus inhibiting the binding of the FlhC/FlhD complex to class 2 promoters, resulting in decreased expression of class 2 flagellar operons. As a chaperone, effects FliD transition to the membrane by preventing its premature polymerization, and by directing it to the export apparatus. In Pectobacterium atrosepticum (strain SCRI 1043 / ATCC BAA-672) (Erwinia carotovora subsp. atroseptica), this protein is Flagellar protein FliT.